The sequence spans 267 residues: MKKTQTWIITCIYLQLLLFNPLVHTQGICRNRVTDDVKDVTKLVANLPKDYMITLKYVPGMDVLPSHCWISEMVEQLSVSLTDLLDKFSNISEGLSNYSIIDKLVKIVDDLVECMEEHSFENVKKSSKSPEPRQFTPEKFFGIFNKSIDAFKDLEIVASTMSECVISSTSSPEKDSRVSVTKPFMLPPVAASSLRNDSSSSNRKASNSIEDSSLQWAAVALPAFFSLVIGFAFGALYWKKKQPNLTRTVENRQINEEDNEISMLQEK.

Positions 1–25 (MKKTQTWIITCIYLQLLLFNPLVHT) are cleaved as a signal peptide. A Pyrrolidone carboxylic acid modification is found at Q26. The Extracellular portion of the chain corresponds to 26 to 215 (QGICRNRVTD…SNSIEDSSLQ (190 aa)). Intrachain disulfides connect C29-C114 and C68-C164. N-linked (GlcNAc...) asparagine glycosylation is found at N90, N97, N145, and N196. The helical transmembrane segment at 216-238 (WAAVALPAFFSLVIGFAFGALYW) threads the bilayer. The Cytoplasmic segment spans residues 239 to 267 (KKKQPNLTRTVENRQINEEDNEISMLQEK).

It belongs to the SCF family. Homodimer, non-covalently linked. Heterotetramer with KIT, binding two KIT molecules; thereby mediates KIT dimerization and subsequent activation by autophosphorylation. Post-translationally, a soluble form is produced by proteolytic processing of the extracellular domain.

Its subcellular location is the cytoplasm. The protein localises to the cytoskeleton. It localises to the cell membrane. It is found in the cell projection. The protein resides in the lamellipodium. Its subcellular location is the filopodium. The protein localises to the secreted. Its function is as follows. Ligand for the receptor-type protein-tyrosine kinase KIT. Plays an essential role in the regulation of cell survival and proliferation, hematopoiesis, stem cell maintenance, gametogenesis, mast cell development, migration and function, and in melanogenesis. KITLG/SCF binding can activate several signaling pathways. Promotes phosphorylation of PIK3R1, the regulatory subunit of phosphatidylinositol 3-kinase, and subsequent activation of the kinase AKT1. KITLG/SCF and KIT also transmit signals via GRB2 and activation of RAS, RAF1 and the MAP kinases MAPK1/ERK2 and/or MAPK3/ERK1. KITLG/SCF and KIT promote activation of STAT family members STAT1, STAT3 and STAT5. KITLG/SCF and KIT promote activation of PLCG1, leading to the production of the cellular signaling molecules diacylglycerol and inositol 1,4,5-trisphosphate. KITLG/SCF acts synergistically with other cytokines, probably interleukins. This is Kit ligand (KITLG) from Ovis aries (Sheep).